A 530-amino-acid chain; its full sequence is Membrane-bound lytic murein transglycosylase F (530 aa).

Positions 1–27 are cleaved as a signal peptide; sequence MTPFAYKLPIRALWLGLLSLLLVGCQI. Residues 28 to 279 are non-LT domain; sequence DSEPKSELEK…SLEEKYIGHI (252 aa). An LT domain region spans residues 280-530; that stretch reads GAFDYVDTRA…SAKPSTESKN (251 aa). Glu-324 is an active-site residue. The disordered stretch occupies residues 505 to 530; it reads ALESESLENSESSAEPSAKPSTESKN. Positions 513–530 are enriched in low complexity; it reads NSESSAEPSAKPSTESKN.

In the N-terminal section; belongs to the bacterial solute-binding protein 3 family. This sequence in the C-terminal section; belongs to the transglycosylase Slt family.

It localises to the cell outer membrane. It carries out the reaction Exolytic cleavage of the (1-&gt;4)-beta-glycosidic linkage between N-acetylmuramic acid (MurNAc) and N-acetylglucosamine (GlcNAc) residues in peptidoglycan, from either the reducing or the non-reducing ends of the peptidoglycan chains, with concomitant formation of a 1,6-anhydrobond in the MurNAc residue.. Functionally, murein-degrading enzyme that degrades murein glycan strands and insoluble, high-molecular weight murein sacculi, with the concomitant formation of a 1,6-anhydromuramoyl product. Lytic transglycosylases (LTs) play an integral role in the metabolism of the peptidoglycan (PG) sacculus. Their lytic action creates space within the PG sacculus to allow for its expansion as well as for the insertion of various structures such as secretion systems and flagella. The sequence is that of Membrane-bound lytic murein transglycosylase F from Vibrio cholerae serotype O1 (strain ATCC 39541 / Classical Ogawa 395 / O395).